Here is a 418-residue protein sequence, read N- to C-terminus: Lysophosphatidic acid phosphatase type 6 (418 aa).

The N-terminal 25 residues, 1-25, are a transit peptide targeting the mitochondrion; that stretch reads MRVWVPVGVLTSLAYCFHQRRVALA. The segment at 51–161 is substrate binding; sequence RHGARSPLKP…VFIRSTNMFR (111 aa). The Nucleophile role is filled by histidine 52. Aspartate 327 acts as the Proton donor in catalysis.

This sequence belongs to the histidine acid phosphatase family. Monomer.

It localises to the mitochondrion. It carries out the reaction a phosphate monoester + H2O = an alcohol + phosphate. The enzyme catalyses 1-(9Z-octadecenoyl)-sn-glycero-3-phosphate + H2O = 1-(9Z-octadecenoyl)-sn-glycerol + phosphate. Its function is as follows. Hydrolyzes lysophosphatidic acid (LPA) containing a medium length fatty acid chain to the corresponding monoacylglycerol. Has highest activity with lysophosphatidic acid containing myristate (C14:0), monounsaturated oleate (C18:1) or palmitate (C16:0), and lower activity with C18:0 and C6:0 lysophosphatidic acid. The protein is Lysophosphatidic acid phosphatase type 6 (Acp6) of Mus musculus (Mouse).